The chain runs to 681 residues: DNA ligase (681 aa).

NAD(+) is bound by residues 42-46, 91-92, and Glu120; these read DAEYD and SL. Catalysis depends on Lys122, which acts as the N6-AMP-lysine intermediate. NAD(+)-binding residues include Arg143, Glu180, Lys302, and Lys326. Residues Cys420, Cys423, Cys438, and Cys444 each contribute to the Zn(2+) site. The 79-residue stretch at 603-681 folds into the BRCT domain; the sequence is ADAQPLLGQT…EAGLIELIGL (79 aa).

This sequence belongs to the NAD-dependent DNA ligase family. LigA subfamily. It depends on Mg(2+) as a cofactor. The cofactor is Mn(2+).

The enzyme catalyses NAD(+) + (deoxyribonucleotide)n-3'-hydroxyl + 5'-phospho-(deoxyribonucleotide)m = (deoxyribonucleotide)n+m + AMP + beta-nicotinamide D-nucleotide.. Functionally, DNA ligase that catalyzes the formation of phosphodiester linkages between 5'-phosphoryl and 3'-hydroxyl groups in double-stranded DNA using NAD as a coenzyme and as the energy source for the reaction. It is essential for DNA replication and repair of damaged DNA. The polypeptide is DNA ligase (Shewanella amazonensis (strain ATCC BAA-1098 / SB2B)).